Consider the following 199-residue polypeptide: N-(5'-phosphoribosyl)anthranilate isomerase (199 aa).

The protein belongs to the TrpF family.

It catalyses the reaction N-(5-phospho-beta-D-ribosyl)anthranilate = 1-(2-carboxyphenylamino)-1-deoxy-D-ribulose 5-phosphate. The protein operates within amino-acid biosynthesis; L-tryptophan biosynthesis; L-tryptophan from chorismate: step 3/5. This is N-(5'-phosphoribosyl)anthranilate isomerase from Streptococcus pneumoniae (strain Taiwan19F-14).